Reading from the N-terminus, the 371-residue chain is Transcription termination/antitermination protein NusA (371 aa).

The region spanning 135–199 is the S1 motif domain; sequence EDIMTGIVQR…KGPQIYVSRT (65 aa). The KH domain maps to 301–367; that stretch reads EKATTVIVPD…EPLFTEPETA (67 aa). The tract at residues 347-371 is disordered; sequence GIYPRELEEDDEPLFTEPETAESDE. Acidic residues predominate over residues 353–371; sequence LEEDDEPLFTEPETAESDE.

Belongs to the NusA family. In terms of assembly, monomer. Binds directly to the core enzyme of the DNA-dependent RNA polymerase and to nascent RNA.

The protein localises to the cytoplasm. Its function is as follows. Participates in both transcription termination and antitermination. The protein is Transcription termination/antitermination protein NusA of Bacillus subtilis (strain 168).